The sequence spans 359 residues: tRNA-specific 2-thiouridylase MnmA (359 aa).

Residues 7–14 (AMSGGVDS) and Met-33 each bind ATP. Cys-101 serves as the catalytic Nucleophile. Cys-101 and Cys-198 are disulfide-bonded. Gly-125 contacts ATP. The interaction with tRNA stretch occupies residues 148–150 (KDQ). The active-site Cysteine persulfide intermediate is the Cys-198.

It belongs to the MnmA/TRMU family.

The protein resides in the cytoplasm. The enzyme catalyses S-sulfanyl-L-cysteinyl-[protein] + uridine(34) in tRNA + AH2 + ATP = 2-thiouridine(34) in tRNA + L-cysteinyl-[protein] + A + AMP + diphosphate + H(+). Catalyzes the 2-thiolation of uridine at the wobble position (U34) of tRNA, leading to the formation of s(2)U34. The protein is tRNA-specific 2-thiouridylase MnmA of Chloroflexus aggregans (strain MD-66 / DSM 9485).